A 256-amino-acid chain; its full sequence is Acetyl-coenzyme A carboxylase carboxyl transferase subunit alpha (256 aa).

Residues 1-236 enclose the CoA carboxyltransferase C-terminal domain; that stretch reads MSDVARILKE…KTAIVDELAE (236 aa).

It belongs to the AccA family. Acetyl-CoA carboxylase is a heterohexamer composed of biotin carboxyl carrier protein (AccB), biotin carboxylase (AccC) and two subunits each of ACCase subunit alpha (AccA) and ACCase subunit beta (AccD).

It is found in the cytoplasm. It carries out the reaction N(6)-carboxybiotinyl-L-lysyl-[protein] + acetyl-CoA = N(6)-biotinyl-L-lysyl-[protein] + malonyl-CoA. It functions in the pathway lipid metabolism; malonyl-CoA biosynthesis; malonyl-CoA from acetyl-CoA: step 1/1. Component of the acetyl coenzyme A carboxylase (ACC) complex. First, biotin carboxylase catalyzes the carboxylation of biotin on its carrier protein (BCCP) and then the CO(2) group is transferred by the carboxyltransferase to acetyl-CoA to form malonyl-CoA. This Streptococcus thermophilus (strain CNRZ 1066) protein is Acetyl-coenzyme A carboxylase carboxyl transferase subunit alpha.